We begin with the raw amino-acid sequence, 131 residues long: Small ribosomal subunit protein uS8 (131 aa).

It belongs to the universal ribosomal protein uS8 family. Part of the 30S ribosomal subunit. Contacts proteins S5 and S12.

In terms of biological role, one of the primary rRNA binding proteins, it binds directly to 16S rRNA central domain where it helps coordinate assembly of the platform of the 30S subunit. This chain is Small ribosomal subunit protein uS8, found in Campylobacter hominis (strain ATCC BAA-381 / DSM 21671 / CCUG 45161 / LMG 19568 / NCTC 13146 / CH001A).